The primary structure comprises 216 residues: Phosducin-like protein 3 (216 aa).

Residues 13 to 59 (AKTIEQQLDQQLDRLDNLDSDDLKVLREQRLREMKDLNNKKQEWLRN) adopt a coiled-coil conformation. The Phosducin domain occupies 29–163 (NLDSDDLKVL…DLGNCDDFAT (135 aa)).

Belongs to the phosducin family. Highly expressed in germline cells of the testis from the spermatogonia stage until the early spermatid stage but is no longer observed in late-stage spermatids in the distal end of the testis.

It carries out the reaction [thioredoxin]-dithiol + NADP(+) = [thioredoxin]-disulfide + NADPH + H(+). Functionally, has redox activity with thioredoxin. Required for male fertility and maturation of sperm past the canoe stage during spermiogenesis. This chain is Phosducin-like protein 3, found in Drosophila melanogaster (Fruit fly).